The primary structure comprises 198 residues: Protein GrpE (198 aa).

Residues 1 to 32 (MTTEKETATPADVEVASQEEQIDQTTEAQVEE) are disordered.

Belongs to the GrpE family. In terms of assembly, homodimer.

It localises to the cytoplasm. Its function is as follows. Participates actively in the response to hyperosmotic and heat shock by preventing the aggregation of stress-denatured proteins, in association with DnaK and GrpE. It is the nucleotide exchange factor for DnaK and may function as a thermosensor. Unfolded proteins bind initially to DnaJ; upon interaction with the DnaJ-bound protein, DnaK hydrolyzes its bound ATP, resulting in the formation of a stable complex. GrpE releases ADP from DnaK; ATP binding to DnaK triggers the release of the substrate protein, thus completing the reaction cycle. Several rounds of ATP-dependent interactions between DnaJ, DnaK and GrpE are required for fully efficient folding. This is Protein GrpE from Haemophilus ducreyi (strain 35000HP / ATCC 700724).